The following is a 144-amino-acid chain: Large ribosomal subunit protein uL15 (144 aa).

A disordered region spans residues Met1–Arg60. Positions Arg21–Ala31 are enriched in gly residues.

It belongs to the universal ribosomal protein uL15 family. In terms of assembly, part of the 50S ribosomal subunit.

Binds to the 23S rRNA. In Alkalilimnicola ehrlichii (strain ATCC BAA-1101 / DSM 17681 / MLHE-1), this protein is Large ribosomal subunit protein uL15.